The chain runs to 93 residues: Photosystem I iron-sulfur center (93 aa).

2 consecutive 4Fe-4S ferredoxin-type domains span residues 13-43 (KDHE…MVPS) and 50-80 (QVVT…IRVY). [4Fe-4S] cluster-binding residues include cysteine 23, cysteine 26, cysteine 29, cysteine 33, cysteine 60, cysteine 63, cysteine 66, and cysteine 70.

As to quaternary structure, the eukaryotic PSI reaction center is composed of at least 11 subunits. Requires [4Fe-4S] cluster as cofactor.

It localises to the plastid. The protein resides in the chloroplast thylakoid membrane. It carries out the reaction reduced [plastocyanin] + hnu + oxidized [2Fe-2S]-[ferredoxin] = oxidized [plastocyanin] + reduced [2Fe-2S]-[ferredoxin]. Its function is as follows. Apoprotein for the two 4Fe-4S centers FA and FB of photosystem I (PSI); essential for photochemical activity. FB is the terminal electron acceptor of PSI, donating electrons to ferredoxin. The C-terminus interacts with PsaA/B/D and helps assemble the protein into the PSI complex. Required for binding of PsaD and PsaE to PSI. PSI is a plastocyanin-ferredoxin oxidoreductase, converting photonic excitation into a charge separation, which transfers an electron from the donor P700 chlorophyll pair to the spectroscopically characterized acceptors A0, A1, FX, FA and FB in turn. The polypeptide is Photosystem I iron-sulfur center (Bigelowiella natans (Pedinomonas minutissima)).